The primary structure comprises 545 residues: Periplasmic trehalase (545 aa).

Residues 1–30 form the signal peptide; that stretch reads MPDRTALPRAMLAAWVLLLLAACSQGPAPT. Residues Arg-160, 167 to 168, Asn-204, 213 to 215, 285 to 287, and Gly-318 contribute to the substrate site; these read WD, RSQ, and RQE. Active-site proton donor/acceptor residues include Asp-320 and Glu-503. Glu-518 contacts substrate.

The protein belongs to the glycosyl hydrolase 37 family.

It is found in the periplasm. It catalyses the reaction alpha,alpha-trehalose + H2O = alpha-D-glucose + beta-D-glucose. Its function is as follows. Provides the cells with the ability to utilize trehalose at high osmolarity by splitting it into glucose molecules that can subsequently be taken up by the phosphotransferase-mediated uptake system. This is Periplasmic trehalase from Pseudomonas aeruginosa (strain ATCC 15692 / DSM 22644 / CIP 104116 / JCM 14847 / LMG 12228 / 1C / PRS 101 / PAO1).